Here is a 233-residue protein sequence, read N- to C-terminus: Esterase FUS5 (233 aa).

Residues serine 105, aspartate 159, and histidine 187 each act as charge relay system in the active site.

This sequence belongs to the LovG family.

Functionally, esterase; part of the gene cluster that mediates the biosynthesis of the mycotoxin fusarin C. Within the cluster, FUS1, FUS2, FUS8 and FUS9 are sufficient for fusarin production. The other FUS cluster members are not essential for fusarin C biosynthesis. The protein is Esterase FUS5 of Gibberella fujikuroi (strain CBS 195.34 / IMI 58289 / NRRL A-6831) (Bakanae and foot rot disease fungus).